The primary structure comprises 227 residues: Small ribosomal subunit protein uS3 (227 aa).

The KH type-2 domain occupies 39 to 107; that stretch reads VRQLLQKRLK…PVHITIEEVR (69 aa).

This sequence belongs to the universal ribosomal protein uS3 family. In terms of assembly, part of the 30S ribosomal subunit. Forms a tight complex with proteins S10 and S14.

Binds the lower part of the 30S subunit head. Binds mRNA in the 70S ribosome, positioning it for translation. This chain is Small ribosomal subunit protein uS3, found in Coxiella burnetii (strain CbuK_Q154) (Coxiella burnetii (strain Q154)).